The sequence spans 351 residues: 1-acylglycerol-3-phosphate O-acyltransferase ABHD5 (351 aa).

Residues 79-184 (PLVLLHGFGG…LILVEPWGFP (106 aa)) form the AB hydrolase-1 domain. A Phosphoserine modification is found at S124. Positions 329–334 (HYVYAD) match the HXXXXD motif motif.

Belongs to the peptidase S33 family. ABHD4/ABHD5 subfamily. As to quaternary structure, interacts with ADRP and PLIN. Interacts with PNPLA2. Interacts with PLIN5; promotes interaction with PNPLA2.

The protein resides in the cytoplasm. Its subcellular location is the lipid droplet. The enzyme catalyses a 1-acyl-sn-glycero-3-phosphate + an acyl-CoA = a 1,2-diacyl-sn-glycero-3-phosphate + CoA. The catalysed reaction is 1-(9Z-octadecenoyl)-sn-glycero-3-phosphate + (9Z)-octadecenoyl-CoA = 1,2-di-(9Z-octadecenoyl)-sn-glycero-3-phosphate + CoA. It carries out the reaction 1-(9Z-octadecenoyl)-sn-glycero-3-phosphate + hexadecanoyl-CoA = 1-(9Z)-octadecenoyl-2-hexadecanoyl-sn-glycero-3-phosphate + CoA. It catalyses the reaction 1-(9Z-octadecenoyl)-sn-glycero-3-phosphate + octadecanoyl-CoA = 1-(9Z-octadecenoyl)-2-octadecanoyl-sn-glycero-3-phosphate + CoA. The enzyme catalyses 1-(9Z-octadecenoyl)-sn-glycero-3-phosphate + (5Z,8Z,11Z,14Z)-eicosatetraenoyl-CoA = 1-(9Z)-octadecenoyl-2-(5Z,8Z,11Z,14Z)-eicosatetraenoyl-sn-glycero-3-phosphate + CoA. The catalysed reaction is eicosanoyl-CoA + 1-(9Z-octadecenoyl)-sn-glycero-3-phosphate = 1-(9Z)-octadecenoyl-2-eicosanoyl-sn-glycero-3-phosphate + CoA. It carries out the reaction 1-hexadecanoyl-sn-glycero-3-phosphate + (9Z)-octadecenoyl-CoA = 1-hexadecanoyl-2-(9Z-octadecenoyl)-sn-glycero-3-phosphate + CoA. It catalyses the reaction 1-octadecanoyl-sn-glycero-3-phosphate + (9Z)-octadecenoyl-CoA = 1-octadecanoyl-2-(9Z-octadecenoyl)-sn-glycero-3-phosphate + CoA. The enzyme catalyses 1-(5Z,8Z,11Z,14Z-eicosatetraenoyl)-sn-glycero-3-phosphate + (9Z)-octadecenoyl-CoA = 1-(5Z,8Z,11Z,14Z)-eicosatetraenoyl-2-(9Z)-octadecenoyl-sn-glycero-3-phosphate + CoA. Acyltransferase activity is inhibited by detergents such as Triton X-100 and 3-[(3-cholamidopropyl)dimethylammonio]-1-propanesulfonate (CHAPS). Acyltransferase activity is inhibited by the presence of magnesium and calcium. Functionally, coenzyme A-dependent lysophosphatidic acid acyltransferase that catalyzes the transfer of an acyl group on a lysophosphatidic acid. Functions preferentially with 1-oleoyl-lysophosphatidic acid followed by 1-palmitoyl-lysophosphatidic acid, 1-stearoyl-lysophosphatidic acid and 1-arachidonoyl-lysophosphatidic acid as lipid acceptor. Functions preferentially with arachidonoyl-CoA followed by oleoyl-CoA as acyl group donors. Functions in phosphatidic acid biosynthesis. May regulate the cellular storage of triacylglycerol through activation of the phospholipase PNPLA2. Involved in keratinocyte differentiation. Regulates lipid droplet fusion. The sequence is that of 1-acylglycerol-3-phosphate O-acyltransferase ABHD5 from Rattus norvegicus (Rat).